Reading from the N-terminus, the 221-residue chain is Adenylate kinase (221 aa).

Residue 10 to 15 participates in ATP binding; that stretch reads GAGKGT. Residues 30 to 59 form an NMP region; that stretch reads STGDMLRAAVKAGTPLGVEAKKVMDAGGLV. AMP contacts are provided by residues Thr31, Arg36, 57-59, 85-88, and Gln92; these read GLV and GFPR. Residues 122-159 are LID; the sequence is GRRVHVASGRTYHVKYNPPKTEGVDDETGEALIQRDDD. ATP is bound by residues Arg123 and 132 to 133; that span reads TY. AMP contacts are provided by Arg156 and Arg167. Gly207 is a binding site for ATP.

The protein belongs to the adenylate kinase family. In terms of assembly, monomer.

It is found in the cytoplasm. It carries out the reaction AMP + ATP = 2 ADP. The protein operates within purine metabolism; AMP biosynthesis via salvage pathway; AMP from ADP: step 1/1. In terms of biological role, catalyzes the reversible transfer of the terminal phosphate group between ATP and AMP. Plays an important role in cellular energy homeostasis and in adenine nucleotide metabolism. In Cupriavidus necator (strain ATCC 17699 / DSM 428 / KCTC 22496 / NCIMB 10442 / H16 / Stanier 337) (Ralstonia eutropha), this protein is Adenylate kinase.